The primary structure comprises 306 residues: Leucotoxin LukEv (306 aa).

The signal sequence occupies residues 1–23 (MLAATLSVGLIAPLASPIQESRA).

Belongs to the aerolysin family. As to quaternary structure, toxicity requires sequential binding and synergistic association of a class S and a class F component which form heterooligomeric complexes. LukEv (class S) associates with LukDv (class F).

The protein localises to the secreted. In terms of biological role, part of a bi-component leucotoxin that acts by forming pores in the membrane of the target cells. The activity of LukEv-LukDv to rabbit leukocytes is similar to that of the Panton-Valentine leucocidin (PVL). LukEv-LukDv is hemolytic to rabbit red blood cells although the activity is only 8% of gamma-hemolysin. This Staphylococcus aureus (strain NCTC 8325 / PS 47) protein is Leucotoxin LukEv (lukEv).